Consider the following 372-residue polypeptide: uncharacterized protein (372 aa).

The signal sequence occupies residues 1–19 (MKIFFLFIILLGIIQLSNS). N-linked (GlcNAc...) asparagine glycosylation occurs at N18. One can recognise an MRH domain in the interval 20–160 (SSCNIDIAGD…IWTTKYSCAI (141 aa)). Residues C22 and C58 are joined by a disulfide bond. An N-linked (GlcNAc...) asparagine glycan is attached at N59. Cysteines 128 and 158 form a disulfide. The stretch at 185 to 282 (NEILNEAQSN…VQFNDDIKLI (98 aa)) forms a coiled coil. The tract at residues 201 to 233 (KNEDLNNNNNNNNNNNNNNNNNNNNNNNNNKIN) is disordered. The segment covering 206–230 (NNNNNNNNNNNNNNNNNNNNNNNNN) has biased composition (low complexity).

It localises to the secreted. This is an uncharacterized protein from Dictyostelium discoideum (Social amoeba).